Here is a 345-residue protein sequence, read N- to C-terminus: RDS/peripherin-like protein xRDS35 (345 aa).

Topologically, residues 1-24 are cytoplasmic; the sequence is MVLFKAKFSFQRRVKLAQTLWLLS. The helical transmembrane segment at 25-43 threads the bilayer; the sequence is WLSVLVGCLTFGMGIFLKV. Residues 44-61 are Lumenal-facing; that stretch reads QLWIHNEVMENTSAHAVP. Residue N54 is glycosylated (N-linked (GlcNAc...) asparagine). A helical transmembrane segment spans residues 62–80; sequence NTVITAGLVGILLGIYAGK. The Cytoplasmic segment spans residues 81-99; the sequence is VSQASMDVTKYQRWKSFMM. A helical membrane pass occupies residues 100 to 123; the sequence is PFFFLAILSCLVCLAALVLSVALR. The Lumenal portion of the chain corresponds to 124-264; that stretch reads GTLEESLKIG…LSYYTGIMAT (141 aa). An N-linked (GlcNAc...) asparagine glycan is attached at N229. A helical transmembrane segment spans residues 265–290; sequence NGAAVTLSFLLQASVLVSLRYLHTSM. At 291 to 345 the chain is on the cytoplasmic side; sequence DKISGPDDMEADTEGFILEKGVTETMNTTLEKMKGLFMSNQVETAEGGGEAAAAS.

Belongs to the PRPH2/ROM1 family. In terms of assembly, homodimer; disulfide-linked. Rod specific.

The protein resides in the membrane. This chain is RDS/peripherin-like protein xRDS35 (rds35), found in Xenopus laevis (African clawed frog).